Here is a 191-residue protein sequence, read N- to C-terminus: Large ribosomal subunit protein uL29m (191 aa).

It belongs to the universal ribosomal protein uL29 family. Component of the mitochondrial large ribosomal subunit. Mature mitochondrial ribosomes consist of a small (37S) and a large (54S) subunit. The 37S subunit contains at least 33 different proteins and 1 molecule of RNA (15S). The 54S subunit contains at least 45 different proteins and 1 molecule of RNA (21S).

The protein localises to the mitochondrion. The chain is Large ribosomal subunit protein uL29m (MRPL4) from Sclerotinia sclerotiorum (strain ATCC 18683 / 1980 / Ss-1) (White mold).